A 453-amino-acid polypeptide reads, in one-letter code: Phosphoglucosamine mutase (453 aa).

Ser102 serves as the catalytic Phosphoserine intermediate. Ser102, Asp244, Asp246, and Asp248 together coordinate Mg(2+). Residue Ser102 is modified to Phosphoserine.

This sequence belongs to the phosphohexose mutase family. The cofactor is Mg(2+). In terms of processing, activated by phosphorylation.

The catalysed reaction is alpha-D-glucosamine 1-phosphate = D-glucosamine 6-phosphate. Its function is as follows. Catalyzes the conversion of glucosamine-6-phosphate to glucosamine-1-phosphate. In Pelobacter propionicus (strain DSM 2379 / NBRC 103807 / OttBd1), this protein is Phosphoglucosamine mutase.